We begin with the raw amino-acid sequence, 1363 residues long: MFLILLISLPMAFAVIGDLKCTTVSINDVDTGAPSISTDIVDVTNGLGTYYVLDRVYLNTTLLLNGYYPTSGSTYRNMALKGTLLLSRLWFKPPFLSDFINGIFAKVKNTKVIKKGVMYSEFPAITIGSTFVNTSYSVVVQPHTTNLDNKLQGLLEISVCQYTMCEYPHTICHPNLGNKRVELWHWDTGVVSCLYKRNFTYDVNADYLYFHFYQEGGTFYAYFTDTGVVTKFLFNVYLGTVLSHYYVLPLTCSSAMTLEYWVTPLTSKQYLLAFNQDGVIFNAVDCKSDFMSEIKCKTLSIAPSTGVYELNGYTVQPIADVYRRIPNLPDCNIEAWLNDKSVPSPLNWERKTFSNCNFNMSSLMSFIQADSFTCNNIDAAKIYGMCFSSITIDKFAIPNGRKVDLQLGNLGYLQSFNYRIDTTATSCQLYYNLPAANVSVSRFNPSTWNRRFGFTEQFVFKPQPVGVFTHHDVVYAQHCFKAPSNFCPCKLDGSLCVGNGPGIDAGYKNSGIGTCPAGTNYLTCHNAAQCNCLCTPDPITSKSTGPYKCPQTKYLVGIGEHCSGLAIKSDYCGGNPCTCQPQAFLGWSVDSCLQGDRCNIFANFILHDVNSGTTCSTDLQKSNTDIILGVCVNYDLYGITGQGIFVEVNATYYNSWQNLLYDSNGNLYGFRDYLTNRTFMIRSCYSGRVSAAFHANSSEPALLFRNIKCNYVFNNTLSRQLQPINYFDSYLGCVVNADNSTSSVVQTCDLTVGSGYCVDYSTKRRSRRAITTGYRFTTFEPFTVNSVNDSLEPVGGLYEIQIPSEFTIGNMEEFIQTSSPKVTIDCSAFVCGDYAACKSQLVEYGSFCDNINAILTEVNELLDTTQLQVANSLMNGVTLSTKLKDGVNFNVDDINFSPVLGCLGSDCNKVSSRSAIEDLLFSKVKLSDVGFVEAYNNCTGGAEIRDLICVQSYNGIKVLPPLLSVNQISGYTLAATSASLFPPLSAAVGVPFYLNVQYRINGIGVTMDVLSQNQKLIANAFNNALDAIQEGFDATNSALVKIQAVVNANAEALNNLLQQLSNRFGAISSSLQEILSRLDALEAQAQIDRLINGRLTALNVYVSQQLSDSTLVKFSAAQAMEKVNECVKSQSSRINFCGNGNHIISLVQNAPYGLYFIHFSYVPTKYVTAKVSPGLCIAGDRGIAPKSGYFVNVNNTWMFTGSGYYYPEPITGNNVVVMSTCAVNYTKAPDVMLNISTPNLHDFKEELDQWFKNQTSVAPDLSLDYINVTFLDLQDEMNRLQEAIKVLNQSYINLKDIGTYEYYVKWPWYVWLLIGFAGVAMLVLLFFICCCTGCGTSCFKICGGCCDDYTGHQELVIKTSHDD.

Positions 1-13 (MFLILLISLPMAF) are cleaved as a signal peptide. Over 14–1307 (AVIGDLKCTT…GTYEYYVKWP (1294 aa)) the chain is Extracellular. The BetaCoV S1-NTD domain maps to 15–298 (VIGDLKCTTV…DFMSEIKCKT (284 aa)). 5 disulfides stabilise this stretch: Cys-21/Cys-165, Cys-160/Cys-193, Cys-172/Cys-252, Cys-286/Cys-296, and Cys-331/Cys-356. 2 N-linked (GlcNAc...) asparagine; by host glycosylation sites follow: Asn-59 and Asn-133. Residue Asn-198 is glycosylated (N-linked (GlcNAc...) asparagine; by host). The BetaCoV S1-CTD domain occupies 329 to 617 (PDCNIEAWLN…DVNSGTTCST (289 aa)). Asn-359 is a glycosylation site (N-linked (GlcNAc...) asparagine; by host). Disulfide bonds link Cys-374–Cys-427 and Cys-386–Cys-615. Asn-437, Asn-649, Asn-676, Asn-696, Asn-714, Asn-739, and Asn-788 each carry an N-linked (GlcNAc...) asparagine; by host glycan. Fusion peptide stretches follow at residues 914-935 (SAIE…VEAY) and 933-953 (EAYN…VQSY). The N-linked (GlcNAc...) asparagine; by host glycan is linked to Asn-937. Cys-938 and Cys-949 are disulfide-bonded. Positions 1014–1064 (QKLIANAFNNALDAIQEGFDATNSALVKIQAVVNANAEALNNLLQQLSNRF) are heptad repeat 1. Residues 1043–1087 (QAVVNANAEALNNLLQQLSNRFGAISSSLQEILSRLDALEAQAQI) are a coiled coil. Asn-1194, Asn-1224, Asn-1234, Asn-1253, Asn-1267, and Asn-1288 each carry an N-linked (GlcNAc...) asparagine; by host glycan. The segment at 1258–1296 (APDLSLDYINVTFLDLQDEMNRLQEAIKVLNQSYINLKD) is heptad repeat 2. Residues 1269–1297 (TFLDLQDEMNRLQEAIKVLNQSYINLKDI) are a coiled coil. The chain crosses the membrane as a helical span at residues 1308 to 1328 (WYVWLLIGFAGVAMLVLLFFI). Residues 1329–1363 (CCCTGCGTSCFKICGGCCDDYTGHQELVIKTSHDD) are Cytoplasmic-facing. The KxHxx motif lies at 1359–1363 (TSHDD).

It belongs to the betacoronaviruses spike protein family. Homotrimer; each monomer consists of a S1 and a S2 subunit. The resulting peplomers protrude from the virus surface as spikes. Specific enzymatic cleavages in vivo yield mature proteins. The precursor is processed into S1 and S2 by host cell furin or another cellular protease to yield the mature S1 and S2 proteins. Additionally, a second cleavage leads to the release of a fusion peptide after viral attachment to host cell receptor. Post-translationally, the cytoplasmic Cys-rich domain is palmitoylated. Spike glycoprotein is digested within host endosomes.

It is found in the virion membrane. The protein localises to the host endoplasmic reticulum-Golgi intermediate compartment membrane. The protein resides in the host cell membrane. Attaches the virion to the cell membrane by interacting with host receptor, initiating the infection. In terms of biological role, mediates fusion of the virion and cellular membranes by acting as a class I viral fusion protein. Under the current model, the protein has at least three conformational states: pre-fusion native state, pre-hairpin intermediate state, and post-fusion hairpin state. During viral and target cell membrane fusion, the coiled coil regions (heptad repeats) assume a trimer-of-hairpins structure, positioning the fusion peptide in close proximity to the C-terminal region of the ectodomain. The formation of this structure appears to drive apposition and subsequent fusion of viral and target cell membranes. Its function is as follows. Acts as a viral fusion peptide which is unmasked following S2 cleavage occurring upon virus endocytosis. This is Spike glycoprotein from Bos taurus (Bovine).